The following is a 437-amino-acid chain: Elongation factor 1-gamma (437 aa).

Position 2 is an N-acetylalanine (A2). The 86-residue stretch at 2 to 87 (AAGTLYTYPE…YVSNEELRGS (86 aa)) folds into the GST N-terminal domain. A GST C-terminal domain is found at 88–216 (TPEAAAQVVQ…VKLCEKMAQF (129 aa)). K147 and K212 each carry N6-acetyllysine. Residues 221–254 (FAETQPKKDTPRKEKGSREEKQKPQAERKEEKKA) show a composition bias toward basic and acidic residues. Positions 221–268 (FAETQPKKDTPRKEKGSREEKQKPQAERKEEKKAAAPAPEEEMDECEQ) are disordered. K253 participates in a covalent cross-link: Glycyl lysine isopeptide (Lys-Gly) (interchain with G-Cter in SUMO1). An EF-1-gamma C-terminal domain is found at 276 to 437 (AKDPFAHLPK…KAFNQGKIFK (162 aa)). A Glycyl lysine isopeptide (Lys-Gly) (interchain with G-Cter in SUMO2) cross-link involves residue K285. K401 is modified (N6-acetyllysine). N6-acetyllysine; alternate is present on K434. K434 is subject to N6-malonyllysine; alternate.

In terms of assembly, EF-1 is composed of four subunits: alpha, beta, delta, and gamma. As to expression, highly expressed in pancreatic tumor tissue and to a lesser extent in normal kidney, intestine, pancreas, stomach, lung, brain, spleen and liver.

Probably plays a role in anchoring the complex to other cellular components. The chain is Elongation factor 1-gamma (EEF1G) from Homo sapiens (Human).